We begin with the raw amino-acid sequence, 575 residues long: Glycosyltransferase family 92 protein At1g27200 (575 aa).

Residues 22–44 (FLSQRYLILCFCCFFVLLFFLSS) form a helical membrane-spanning segment. One can recognise a GT92 domain in the interval 293 to 540 (LCVCTMLWNQ…TEAIEPPDWK (248 aa)).

It belongs to the glycosyltransferase 92 family.

Its subcellular location is the membrane. The sequence is that of Glycosyltransferase family 92 protein At1g27200 from Arabidopsis thaliana (Mouse-ear cress).